Reading from the N-terminus, the 365-residue chain is MIIDTTTVQAINSFSRLKSLNEVYGIIWMLVPILTLVLGITIGILVIVWLEREISAGIQQRIGPEYAGPFGVLQALADGTKLLFKENLFPSRGDTRLFSIGPSIAVISTLLSYSVIPFGYHFVLADLNIGVFLWIAISSIAPIGLLMSGYGSNNKYSFLGGLRAAAQSISYEIPLTLCVLSISLLSNSSSTVDIVEAQSKYGLGGWNLWRQPIGFIIFFISSLAECERLPFDLPEAEEELVAGYQTEYSGIKFGLFYVASYLNLLVSSLFVAVLYLGGWNISIPYISVPEFFDFEINKVGRVFGTTMGILITLVKTYLFLFIPITTRWTLPRLRMDQLLNLGWKFLLPISLGNLLLTTSSQLFSL.

Transmembrane regions (helical) follow at residues L30–L50, I104–L124, I129–G149, F253–V273, V302–I322, and L338–T358.

This sequence belongs to the complex I subunit 1 family. In terms of assembly, NDH is composed of at least 16 different subunits, 5 of which are encoded in the nucleus.

The protein resides in the plastid. Its subcellular location is the chloroplast thylakoid membrane. The catalysed reaction is a plastoquinone + NADH + (n+1) H(+)(in) = a plastoquinol + NAD(+) + n H(+)(out). The enzyme catalyses a plastoquinone + NADPH + (n+1) H(+)(in) = a plastoquinol + NADP(+) + n H(+)(out). In terms of biological role, NDH shuttles electrons from NAD(P)H:plastoquinone, via FMN and iron-sulfur (Fe-S) centers, to quinones in the photosynthetic chain and possibly in a chloroplast respiratory chain. The immediate electron acceptor for the enzyme in this species is believed to be plastoquinone. Couples the redox reaction to proton translocation, and thus conserves the redox energy in a proton gradient. The chain is NAD(P)H-quinone oxidoreductase subunit 1, chloroplastic from Populus trichocarpa (Western balsam poplar).